The chain runs to 68 residues: Virion membrane protein OPG139 (68 aa).

Residues 1–21 (MIGILLLIGICVAVTVAILYA) traverse the membrane as a helical segment. Over 22–68 (MYNKIKNSQNPSPNVNLPPPETRNTRFVNNLEKDHISSLYNLVKSSV) the chain is Virion surface.

This sequence belongs to the orthopoxvirus OPG139 family. In terms of processing, phosphorylated by a OPG054-independent mechanism.

It localises to the virion membrane. In terms of biological role, essential for the encapsidation of DNA into immature virions (IV) and the subsequent maturation of IV into mature virions (MV). The sequence is that of Virion membrane protein OPG139 (OPG139) from Homo sapiens (Human).